Reading from the N-terminus, the 407-residue chain is Shaggy-related protein kinase GSK1 (407 aa).

A compositionally biased stretch (pro residues) spans 1 to 19; that stretch reads MEAPPGPEPMELDAPPPPA. The tract at residues 1–21 is disordered; sequence MEAPPGPEPMELDAPPPPAAV. The 285-residue stretch at 68-352 folds into the Protein kinase domain; that stretch reads YMAERVVGTG…ALDACAHSFF (285 aa). ATP is bound by residues 74-82 and lysine 97; that span reads VGTGSFGIV. Residue aspartate 193 is the Proton acceptor of the active site.

This sequence belongs to the protein kinase superfamily. CMGC Ser/Thr protein kinase family. GSK-3 subfamily. In terms of assembly, interacts with LIC. In terms of tissue distribution, highly expressed in the entire young panicles, spikelets, awns, vascular bundles of palea and lemma, stigma and rachilla. Expressed in root tips, root hairs, lamina joint in the collar region, vascular bundles of coleoptiles.

The catalysed reaction is L-seryl-[protein] + ATP = O-phospho-L-seryl-[protein] + ADP + H(+). The enzyme catalyses L-threonyl-[protein] + ATP = O-phospho-L-threonyl-[protein] + ADP + H(+). Functionally, probable serine-threonine kinase that may act as a negative regulator of brassinosteroid (BR) signaling during flower development. May have physiological roles in stress signal-transduction pathways. Phosphorylates LIC in response to BR perception. The sequence is that of Shaggy-related protein kinase GSK1 from Oryza sativa subsp. japonica (Rice).